Consider the following 413-residue polypeptide: Putative F-box/kelch-repeat protein At4g22430 (413 aa).

In terms of domain architecture, F-box spans 5-54 (NNTITDVLEGIVTEILVRLPLRSISRFKSVSQTWKSAIESVYFRRLFVSL). A Kelch repeat occupies 168–210 (NMFLNKGEMYMPLYVYSSETGFWIHKEVVCPVRLPNFYDPISL).

The polypeptide is Putative F-box/kelch-repeat protein At4g22430 (Arabidopsis thaliana (Mouse-ear cress)).